The chain runs to 174 residues: Adenylate kinase (174 aa).

The interval 12 to 41 (STGDMLRAAIKAGTPLGLEAKKIIDEGGLV) is NMP. AMP-binding positions include Thr-13, Arg-18, 39–41 (GLV), 67–70 (GFPR), and Gln-74. An LID region spans residues 104–141 (GRRVHLASGRTYHVTYNPPKVEGKDDVTGEDLIQRDDD). ATP-binding positions include Arg-105 and 114 to 115 (TY). Residues Arg-138 and Arg-149 each contribute to the AMP site.

The protein belongs to the adenylate kinase family. Monomer.

The protein resides in the cytoplasm. It carries out the reaction AMP + ATP = 2 ADP. It functions in the pathway purine metabolism; AMP biosynthesis via salvage pathway; AMP from ADP: step 1/1. Its function is as follows. Catalyzes the reversible transfer of the terminal phosphate group between ATP and AMP. Plays an important role in cellular energy homeostasis and in adenine nucleotide metabolism. This is Adenylate kinase from Neisseria cinerea.